A 442-amino-acid chain; its full sequence is 3-phosphoshikimate 1-carboxyvinyltransferase (442 aa).

Lys-25, Ser-26, and Arg-30 together coordinate 3-phosphoshikimate. Position 25 (Lys-25) interacts with phosphoenolpyruvate. Phosphoenolpyruvate is bound by residues Gly-96 and Arg-124. Residues Ser-171, Ser-172, Gln-173, Ser-203, Asp-325, and Lys-352 each contribute to the 3-phosphoshikimate site. Residue Gln-173 coordinates phosphoenolpyruvate. Asp-325 acts as the Proton acceptor in catalysis. Phosphoenolpyruvate-binding residues include Arg-356, Arg-400, and Lys-425.

It belongs to the EPSP synthase family. As to quaternary structure, monomer.

Its subcellular location is the cytoplasm. It carries out the reaction 3-phosphoshikimate + phosphoenolpyruvate = 5-O-(1-carboxyvinyl)-3-phosphoshikimate + phosphate. Its pathway is metabolic intermediate biosynthesis; chorismate biosynthesis; chorismate from D-erythrose 4-phosphate and phosphoenolpyruvate: step 6/7. In terms of biological role, catalyzes the transfer of the enolpyruvyl moiety of phosphoenolpyruvate (PEP) to the 5-hydroxyl of shikimate-3-phosphate (S3P) to produce enolpyruvyl shikimate-3-phosphate and inorganic phosphate. This Bordetella pertussis (strain Tohama I / ATCC BAA-589 / NCTC 13251) protein is 3-phosphoshikimate 1-carboxyvinyltransferase.